We begin with the raw amino-acid sequence, 642 residues long: Serotransferrin (642 aa).

2 consecutive Transferrin-like domains span residues 1-280 and 290-621; these read GIKE…SLKK and IKWC…SLRQ. Fe(3+)-binding residues include aspartate 25 and tyrosine 54. Intrachain disulfides connect cysteine 77–cysteine 158, cysteine 121–cysteine 137, and cysteine 186–cysteine 200. The hydrogencarbonate site is built by threonine 79, lysine 83, alanine 85, and glycine 86. Tyrosine 152 is a binding site for Fe(3+). Histidine 208 lines the Fe(3+) pocket. Intrachain disulfides connect cysteine 293/cysteine 329 and cysteine 303/cysteine 320. Aspartate 344 lines the Fe(3+) pocket. Intrachain disulfides connect cysteine 354–cysteine 633, cysteine 369–cysteine 594, cysteine 402–cysteine 480, cysteine 426–cysteine 622, cysteine 436–cysteine 450, cysteine 447–cysteine 463, and cysteine 520–cysteine 535. A glycan (N-linked (GlcNAc...) asparagine) is linked at asparagine 365. Tyrosine 379 is a binding site for Fe(3+). The hydrogencarbonate site is built by threonine 404, arginine 408, alanine 410, and glycine 411. A Fe(3+)-binding site is contributed by tyrosine 474. Residue histidine 543 coordinates Fe(3+).

Belongs to the transferrin family. As to quaternary structure, monomer. In terms of tissue distribution, brain and liver; to a lesser extent in kidney and heart.

The protein localises to the secreted. Its function is as follows. Transferrins are iron binding transport proteins which can bind two Fe(3+) ions in association with the binding of an anion, usually bicarbonate. This Gadus morhua (Atlantic cod) protein is Serotransferrin (tf).